The following is a 334-amino-acid chain: Trans-1,2-dihydrobenzene-1,2-diol dehydrogenase (334 aa).

This sequence belongs to the Gfo/Idh/MocA family. Homodimer. In terms of tissue distribution, kidney.

It carries out the reaction (1R,2R)-1,2-dihydrobenzene-1,2-diol + NADP(+) = catechol + NADPH + H(+). The catalysed reaction is D-xylose + NADP(+) = D-xylono-1,5-lactone + NADPH + H(+). In Macaca fascicularis (Crab-eating macaque), this protein is Trans-1,2-dihydrobenzene-1,2-diol dehydrogenase (DHDH).